Here is a 241-residue protein sequence, read N- to C-terminus: Superoxide dismutase [Mn] 2, mitochondrial (241 aa).

Residues histidine 60, histidine 108, aspartate 197, and histidine 201 each contribute to the Mn(2+) site.

The protein belongs to the iron/manganese superoxide dismutase family. Homotetramer. Mn(2+) serves as cofactor.

The protein resides in the mitochondrion matrix. It carries out the reaction 2 superoxide + 2 H(+) = H2O2 + O2. In terms of biological role, destroys superoxide anion radicals which are normally produced within the cells and which are toxic to biological systems. The sequence is that of Superoxide dismutase [Mn] 2, mitochondrial (MSD2) from Arabidopsis thaliana (Mouse-ear cress).